Here is a 359-residue protein sequence, read N- to C-terminus: Histidinol-phosphate aminotransferase (359 aa).

Lys217 is subject to N6-(pyridoxal phosphate)lysine.

The protein belongs to the class-II pyridoxal-phosphate-dependent aminotransferase family. Histidinol-phosphate aminotransferase subfamily. Homodimer. It depends on pyridoxal 5'-phosphate as a cofactor.

It carries out the reaction L-histidinol phosphate + 2-oxoglutarate = 3-(imidazol-4-yl)-2-oxopropyl phosphate + L-glutamate. Its pathway is amino-acid biosynthesis; L-histidine biosynthesis; L-histidine from 5-phospho-alpha-D-ribose 1-diphosphate: step 7/9. The protein is Histidinol-phosphate aminotransferase of Salmonella enteritidis PT4 (strain P125109).